We begin with the raw amino-acid sequence, 156 residues long: MPRRREVPKREILPDPKYHNAEVAKFVNVLMTRGKKSVAERIIYGAMDQIHKKTGKDPVEVFTQALSNVRPMVEVKSRRVGGANYQVPVEVRSIRRNALAMRWLRDAARKRAEKSMGARLAGELAEAAEGRGGAVKKREEVHRMAEANKAFAHYRF.

The protein belongs to the universal ribosomal protein uS7 family. In terms of assembly, part of the 30S ribosomal subunit. Contacts proteins S9 and S11.

In terms of biological role, one of the primary rRNA binding proteins, it binds directly to 16S rRNA where it nucleates assembly of the head domain of the 30S subunit. Is located at the subunit interface close to the decoding center, probably blocks exit of the E-site tRNA. This is Small ribosomal subunit protein uS7 from Nitrosospira multiformis (strain ATCC 25196 / NCIMB 11849 / C 71).